The sequence spans 524 residues: Translation initiation factor eIF2B subunit delta (524 aa).

A disordered region spans residues 1 to 174 (MAAVAVAVRE…RQQVPTRKDY (174 aa)). Residue Ala-2 is modified to N-acetylalanine. Basic and acidic residues-rich tracts occupy residues 8–20 (VREESRSEMKTEL) and 31–40 (LTQEEKLQLR). The residue at position 12 (Ser-12) is a Phosphoserine. Positions 41–51 (KEKKQQKKKRK) are enriched in basic residues. Phosphothreonine is present on Thr-86. Composition is skewed to basic and acidic residues over residues 96–121 (SKAELRAERRAKQEAERALKQARKGE) and 161–174 (RKPDRQQVPTRKDY). A may bind the chemical integrated stress response (ISR) inhibitor ISRIB region spans residues 171-180 (RKDYGSKVSL).

The protein belongs to the eIF-2B alpha/beta/delta subunits family. As to quaternary structure, component of the translation initiation factor 2B (eIF2B) complex which is a heterodecamer of two sets of five different subunits: alpha, beta, gamma, delta and epsilon. Subunits alpha, beta and delta comprise a regulatory subcomplex and subunits epsilon and gamma comprise a catalytic subcomplex. Within the complex, the hexameric regulatory complex resides at the center, with the two heterodimeric catalytic subcomplexes bound on opposite sides.

The protein resides in the cytoplasm. It is found in the cytosol. Activated by the chemical integrated stress response (ISR) inhibitor ISRIB which stimulates guanine nucleotide exchange factor activity for both phosphorylated and unphosphorylated eIF2. Acts as a component of the translation initiation factor 2B (eIF2B) complex, which catalyzes the exchange of GDP for GTP on eukaryotic initiation factor 2 (eIF2) gamma subunit. Its guanine nucleotide exchange factor activity is repressed when bound to eIF2 complex phosphorylated on the alpha subunit, thereby limiting the amount of methionyl-initiator methionine tRNA available to the ribosome and consequently global translation is repressed. The chain is Translation initiation factor eIF2B subunit delta (Eif2b4) from Rattus norvegicus (Rat).